Consider the following 70-residue polypeptide: Small ribosomal subunit protein bS21A (70 aa).

This sequence belongs to the bacterial ribosomal protein bS21 family.

This chain is Small ribosomal subunit protein bS21A (rpsU1), found in Burkholderia mallei (strain ATCC 23344).